We begin with the raw amino-acid sequence, 711 residues long: MLNPIVRKFQYGQHTVTLETGMMARQATAAVMVSMDDTAVFVTVVGQKKAKPGQDFFPLTVNYQERTYAAGRIPGSFFRREGRPSEGETLIARLIDRPVRPLFPEGFVNEVQVIATVVSVNPQVNPDIVAMIGASAALSLSGIPFNGPIGAARVGYINDQYVLNPTQDELKESKLDLVVAGTEAAVLMVESEAELLSEDTMLGAVVFGHEQQQIVIQNINDLVKEAGKPRWDWQQEAVNEALNARVAALAEARLSDAYRITDKQERYAQVDVIKSETIAALVAEDETLDENELGEILHAIEKNVVRSRVLAGEPRIDGREKDMIRGLDVRTGVLPRTHGSALFTRGETQALVTATLGTARDAQVLDELMGERTDSFLFHYNFPPYSVGETGMVGSPKRREIGHGRLAKRGVLAVMPEMDKFPYTVRVVSEITESNGSSSMASVCGASLALMDAGVPIKAAVAGIAMGLVKEGDNFVVLSDILGDEDHLGDMDFKVAGSRDGISALQMDIKIEGITKEIMQVALNQAKGARLHILGVMEQAINAPRGDISQFAPRIHTIKINPDKIKDVIGKGGSVIRALTEETGTTIEIEDDGTVKIAATDGEKAKHAIRRIEEITAEIEVGRIYNGKVTRIVDFGAFVAIGGGKEGLVHISQIADKRVEKVTDYLQMGQEVPVKVLEVDRQGRVRLSIKEATEQSQPAAAPEAPAAEQGE.

Asp-486 and Asp-492 together coordinate Mg(2+). The region spanning 553–612 is the KH domain; sequence PRIHTIKINPDKIKDVIGKGGSVIRALTEETGTTIEIEDDGTVKIAATDGEKAKHAIRRI. The 69-residue stretch at 622 to 690 folds into the S1 motif domain; it reads GRIYNGKVTR…RQGRVRLSIK (69 aa). The disordered stretch occupies residues 690–711; sequence KEATEQSQPAAAPEAPAAEQGE. A compositionally biased stretch (low complexity) spans 694 to 711; that stretch reads EQSQPAAAPEAPAAEQGE.

This sequence belongs to the polyribonucleotide nucleotidyltransferase family. As to quaternary structure, component of the RNA degradosome, which is a multiprotein complex involved in RNA processing and mRNA degradation. Requires Mg(2+) as cofactor.

The protein resides in the cytoplasm. The enzyme catalyses RNA(n+1) + phosphate = RNA(n) + a ribonucleoside 5'-diphosphate. Involved in mRNA degradation. Catalyzes the phosphorolysis of single-stranded polyribonucleotides processively in the 3'- to 5'-direction. The chain is Polyribonucleotide nucleotidyltransferase from Citrobacter koseri (strain ATCC BAA-895 / CDC 4225-83 / SGSC4696).